We begin with the raw amino-acid sequence, 315 residues long: D-alanine--D-alanine ligase B (315 aa).

One can recognise an ATP-grasp domain in the interval 109–309 (KKVAAAAGVV…FAELLSWMVE (201 aa)). 135 to 190 (PMKPPYVVKPVREGSSFGVVIVKEDQPHPPQVIGSADWKYGDEVMVEGYIAGRELT) contacts ATP. Asp-259, Glu-276, and Asn-278 together coordinate Mg(2+).

This sequence belongs to the D-alanine--D-alanine ligase family. It depends on Mg(2+) as a cofactor. Mn(2+) serves as cofactor.

The protein resides in the cytoplasm. The enzyme catalyses 2 D-alanine + ATP = D-alanyl-D-alanine + ADP + phosphate + H(+). Its pathway is cell wall biogenesis; peptidoglycan biosynthesis. Cell wall formation. This is D-alanine--D-alanine ligase B from Brucella melitensis biotype 1 (strain ATCC 23456 / CCUG 17765 / NCTC 10094 / 16M).